A 518-amino-acid chain; its full sequence is Sensor protein kinase HptS (518 aa).

2 consecutive transmembrane segments (helical) span residues 20–40 and 222–242; these read IFPV…IYIW and GITL…FGFI. The Histidine kinase domain occupies 297-513; sequence EQLIHSIEHT…LICYKIPLSR (217 aa). Phosphohistidine; by autocatalysis is present on H325.

Autophosphorylated.

The protein localises to the cell membrane. It carries out the reaction ATP + protein L-histidine = ADP + protein N-phospho-L-histidine.. In terms of biological role, member of the two-component regulatory system HptS/HptR that regulates genes involved in hexose phosphate transport system in response to changes in extracellular phosphate sources. May act as a sensor protein kinase which is autophosphorylated at a histidine residue and transfers its phosphate group to the conserved aspartic acid residue in the regulatory domain of HptS. In turn, HptS antagonizes CcpA-dependent transcription of a subset of CcpA-regulated genes involved in antibiotic susceptibility. This is Sensor protein kinase HptS (hptS) from Staphylococcus aureus (strain Mu50 / ATCC 700699).